The chain runs to 616 residues: Chaperone protein HscA (616 aa).

This sequence belongs to the heat shock protein 70 family.

Chaperone involved in the maturation of iron-sulfur cluster-containing proteins. Has a low intrinsic ATPase activity which is markedly stimulated by HscB. Involved in the maturation of IscU. The chain is Chaperone protein HscA from Edwardsiella ictaluri (strain 93-146).